A 479-amino-acid polypeptide reads, in one-letter code: Ribulose bisphosphate carboxylase large chain 2 (479 aa).

Positions 116 and 166 each coordinate substrate. Lys-168 (proton acceptor) is an active-site residue. Position 170 (Lys-170) interacts with substrate. Positions 194, 196, and 197 each coordinate Mg(2+). At Lys-194 the chain carries N6-carboxylysine. The active-site Proton acceptor is the His-287. Residues Arg-288, His-320, and Ser-372 each contribute to the substrate site.

It belongs to the RuBisCO large chain family. Type I subfamily. As to quaternary structure, heterohexadecamer of 8 large chains and 8 small chains. It depends on Mg(2+) as a cofactor.

It catalyses the reaction 2 (2R)-3-phosphoglycerate + 2 H(+) = D-ribulose 1,5-bisphosphate + CO2 + H2O. The catalysed reaction is D-ribulose 1,5-bisphosphate + O2 = 2-phosphoglycolate + (2R)-3-phosphoglycerate + 2 H(+). Functionally, ruBisCO catalyzes two reactions: the carboxylation of D-ribulose 1,5-bisphosphate, the primary event in carbon dioxide fixation, as well as the oxidative fragmentation of the pentose substrate. Both reactions occur simultaneously and in competition at the same active site. This is Ribulose bisphosphate carboxylase large chain 2 from Bradyrhizobium sp. (strain BTAi1 / ATCC BAA-1182).